Consider the following 173-residue polypeptide: NAD(P)H-quinone oxidoreductase subunit J (173 aa).

The protein belongs to the complex I 30 kDa subunit family. As to quaternary structure, NDH-1 can be composed of about 15 different subunits; different subcomplexes with different compositions have been identified which probably have different functions.

It is found in the cellular thylakoid membrane. It carries out the reaction a plastoquinone + NADH + (n+1) H(+)(in) = a plastoquinol + NAD(+) + n H(+)(out). It catalyses the reaction a plastoquinone + NADPH + (n+1) H(+)(in) = a plastoquinol + NADP(+) + n H(+)(out). NDH-1 shuttles electrons from an unknown electron donor, via FMN and iron-sulfur (Fe-S) centers, to quinones in the respiratory and/or the photosynthetic chain. The immediate electron acceptor for the enzyme in this species is believed to be plastoquinone. Couples the redox reaction to proton translocation, and thus conserves the redox energy in a proton gradient. Cyanobacterial NDH-1 also plays a role in inorganic carbon-concentration. This chain is NAD(P)H-quinone oxidoreductase subunit J, found in Prochlorococcus marinus (strain NATL2A).